Reading from the N-terminus, the 535-residue chain is Dual specificity calcium/calmodulin-dependent 3',5'-cyclic nucleotide phosphodiesterase 1B (535 aa).

Residues 1–21 (MELSPRSPPEMLESDCPSPLE) are disordered. Ser-7 and Ser-14 each carry phosphoserine. Calmodulin-binding stretches follow at residues 26–46 (PSKKMWIKLRSLLRYMVKQLE) and 117–140 (EKPKFRSIVHAVQAGIFVERMFRR). The PDEase domain occupies 145 to 502 (VGPTYSTAVH…QKWKERAASG (358 aa)). Catalysis depends on His-222, which acts as the Proton donor. Zn(2+) contacts are provided by His-226, His-262, Asp-263, and Asp-369. Residue Asp-263 coordinates Mg(2+). Disordered regions lie at residues 445–474 (PLADDDSKSKSQPSFQWRQPSLDVDVGDPN) and 495–535 (WKER…GNLD). Positions 454–463 (KSQPSFQWRQ) are enriched in polar residues. Phosphoserine occurs at positions 465 and 513.

It belongs to the cyclic nucleotide phosphodiesterase family. PDE1 subfamily. As to quaternary structure, homodimer. The cofactor is Zn(2+). It depends on Mg(2+) as a cofactor.

Its subcellular location is the cytoplasm. The protein localises to the cytosol. It catalyses the reaction a nucleoside 3',5'-cyclic phosphate + H2O = a nucleoside 5'-phosphate + H(+). It carries out the reaction 3',5'-cyclic GMP + H2O = GMP + H(+). The catalysed reaction is 3',5'-cyclic AMP + H2O = AMP + H(+). Type I PDE are activated by the binding of calmodulin in the presence of Ca(2+). Its function is as follows. Cyclic nucleotide phosphodiesterase with a dual specificity for the second messengers cAMP and cGMP, which are key regulators of many important physiological processes. Has a preference for cGMP as a substrate. This is Dual specificity calcium/calmodulin-dependent 3',5'-cyclic nucleotide phosphodiesterase 1B from Cricetulus griseus (Chinese hamster).